A 282-amino-acid chain; its full sequence is MASSFLPAGAITGDSGGELSSGDDSGEVEFPHSPEIEETSCLAELFEKAAAHLQGLIQVASREQLLYLYARYKQVKVGNCNTPKPSFFDFEGKQKWEAWKALGDSSPSQAMQEYIAVVKKLDPGWNPQIPEKKGKEANTGFGGPVISSLYHEETIREEDKNIFDYCRENNIDHITKAIKSKNVDVNVKDEEGRALLHWACDRGHKELVTVLLQHRADINCQDNEGQTALHYASACEFLDIVELLLQSGADPTLRDQDGCLPEEVTGCKTVSLVLQRHTTGKA.

Residues 1-31 form a disordered region; it reads MASSFLPAGAITGDSGGELSSGDDSGEVEFP. Residues 42 to 127 enclose the ACB domain; the sequence is LAELFEKAAA…VKKLDPGWNP (86 aa). An acyl-CoA is bound by residues 69–73 and Lys95; that span reads YARYK. A Phosphoserine modification is found at Ser106. Tyr114 serves as a coordination point for an acyl-CoA. 2 ANK repeats span residues 191 to 220 and 224 to 253; these read EGRA…DINC and EGQT…DPTL.

In terms of assembly, monomer. As to expression, detected in placenta and spleen (at protein level). Detected in placenta, umbilical cord blood, CD34-positive hematopoietic progenitor cells and bone marrow.

The protein resides in the cytoplasm. It is found in the nucleus. Its function is as follows. Binds long-chain acyl-coenzyme A molecules with a strong preference for unsaturated C18:1-CoA, lower affinity for unsaturated C20:4-CoA, and very weak affinity for saturated C16:0-CoA. Does not bind fatty acids. Plays a role in protein N-myristoylation. The sequence is that of Acyl-CoA-binding domain-containing protein 6 (ACBD6) from Homo sapiens (Human).